A 646-amino-acid polypeptide reads, in one-letter code: Long-chain fatty acid transport protein 1 (646 aa).

Topologically, residues 1 to 13 (MRAPGAGTASVAS) are extracellular. The chain crosses the membrane as a helical span at residues 14 to 34 (LALLWFLGLPWTWSAAAAFCV). At 35–646 (YVGGGGWRFL…ARICAGDFSL (612 aa)) the chain is on the cytoplasmic side. The interval 191–475 (EVSEQLGKSL…YVSDSATNKK (285 aa)) is sufficient for oligomerization. 246–257 (YIYTSGTTGLPK) contributes to the AMP binding site.

It belongs to the ATP-dependent AMP-binding enzyme family. In terms of assembly, self-associates. May function as a homodimer. Interacts with EPRS1; mediates the translocation of SLC27A1 from the cytoplasm to the plasma membrane thereby increasing the uptake of long-chain fatty acids. Interacts with DGAT2 and this interaction is enhanced in the presence of ZFYVE1. In terms of tissue distribution, higher expression in white adipose tissue than in heart. Highest expression in skeletal muscle, heart and fat. Lower levels in brain, kidney, lung, liver and testis. No expression in spleen or intestine.

It is found in the cell membrane. The protein resides in the mitochondrion outer membrane. The protein localises to the endomembrane system. Its subcellular location is the cytoplasm. The enzyme catalyses a fatty acid(in) = a fatty acid(out). It catalyses the reaction (9Z)-octadecenoate(out) = (9Z)-octadecenoate(in). The catalysed reaction is hexadecanoate(out) = hexadecanoate(in). It carries out the reaction (5Z,8Z,11Z,14Z)-eicosatetraenoate(out) = (5Z,8Z,11Z,14Z)-eicosatetraenoate(in). The enzyme catalyses (9Z,12Z)-octadecadienoate(out) = (9Z,12Z)-octadecadienoate(in). It catalyses the reaction a long-chain fatty acid + ATP + CoA = a long-chain fatty acyl-CoA + AMP + diphosphate. The catalysed reaction is (5Z,8Z,11Z,14Z)-eicosatetraenoate + ATP + CoA = (5Z,8Z,11Z,14Z)-eicosatetraenoyl-CoA + AMP + diphosphate. It carries out the reaction a very long-chain fatty acid + ATP + CoA = a very long-chain fatty acyl-CoA + AMP + diphosphate. The enzyme catalyses tetracosanoate + ATP + CoA = tetracosanoyl-CoA + AMP + diphosphate. Its activity is regulated as follows. Inhibited by Triacsin C. Both insulin and muscle contraction stimulate translocation to the plasma membrane in muscle, increasing fatty acid transport activity. Mediates the import of long-chain fatty acids (LCFA) into the cell by facilitating their transport at the plasma membrane. Also functions as an acyl-CoA ligase catalyzing the ATP-dependent formation of fatty acyl-CoA using LCFA and very-long-chain fatty acids (VLCFA) as substrates, which prevents fatty acid efflux from cells and might drive more fatty acid uptake. May act directly as a bona fide transporter, or alternatively, in a cytoplasmic or membrane-associated multimeric protein complex to trap and draw fatty acids towards accumulation. Plays a pivotal role in regulating available LCFA substrates from exogenous sources in tissues undergoing high levels of beta-oxidation or triglyceride synthesis. May be involved in regulation of cholesterol metabolism. Probably involved in fatty acid transport across the blood barrier. This Mus musculus (Mouse) protein is Long-chain fatty acid transport protein 1.